Here is a 186-residue protein sequence, read N- to C-terminus: Peptide deformylase (186 aa).

Cys113 and His156 together coordinate Fe cation. The active site involves Glu157. His160 provides a ligand contact to Fe cation.

It belongs to the polypeptide deformylase family. It depends on Fe(2+) as a cofactor.

It carries out the reaction N-terminal N-formyl-L-methionyl-[peptide] + H2O = N-terminal L-methionyl-[peptide] + formate. In terms of biological role, removes the formyl group from the N-terminal Met of newly synthesized proteins. Requires at least a dipeptide for an efficient rate of reaction. N-terminal L-methionine is a prerequisite for activity but the enzyme has broad specificity at other positions. This Limosilactobacillus reuteri (strain DSM 20016) (Lactobacillus reuteri) protein is Peptide deformylase.